The following is a 144-amino-acid chain: Maximins 8/H7 (144 aa).

A signal peptide spans 1–18; that stretch reads MKFKYIVAVSFLIASAYA. A propeptide spanning residues 19–43 is cleaved from the precursor; it reads RSEENDEQSLSQRDVLEEESLREIR. Asn70 bears the Asparagine amide mark. Residues 74–123 constitute a propeptide that is removed on maturation; that stretch reads TAEDHEVMKRLEAVMRDLDSLDYPEEASERETRGFNQEEIANLFTKKEKR. Leu143 carries the post-translational modification Leucine amide.

This sequence belongs to the bombinin family. In terms of tissue distribution, expressed by the skin glands.

It localises to the secreted. In terms of biological role, maximin-8 shows antimicrobial activity against bacteria and against the fungus C.albicans. It has little hemolytic activity. Its function is as follows. Maximin-H7 shows antimicrobial activity against bacteria and against the fungus C.albicans. Shows strong hemolytic activity. The chain is Maximins 8/H7 from Bombina maxima (Giant fire-bellied toad).